A 57-amino-acid polypeptide reads, in one-letter code: Potassium channel toxin KTx1 (57 aa).

A signal peptide spans 1–13 (FLVLLLVSLMCYA). Positions 14–18 (EIAEG) are excised as a propeptide. Intrachain disulfides connect Cys-24-Cys-37, Cys-30-Cys-42, and Cys-36-Cys-51.

Belongs to the scorpion calcin-like family. KTX subfamily. In terms of tissue distribution, expressed by the venom gland.

The protein localises to the secreted. This recombinant peptide inhibits voltage-gated potassium channels mKv1.3/KCNA3 (IC(50)=1.70 uM), mKv1.1/KCNA1 (10 uM inhibits 40% of currents) and hKv1.2/KCNA2 (10 uM inhibits 42% of currents). May also increase intracellular calcium release through the activation of nuclear inositol 1,4,5-trisphosphate receptors (ITPR) of cardiomyocytes, thereby causing an increase in the contraction frequency of these cells. This Isometrus maculatus (Lesser brown scorpion) protein is Potassium channel toxin KTx1.